Reading from the N-terminus, the 789-residue chain is Spermatogenesis-associated protein 20 (789 aa).

Over residues 1–19 the composition is skewed to basic residues; the sequence is MSHHSPPPPKHKGEHKGHG. The tract at residues 1 to 65 is disordered; the sequence is MSHHSPPPPK…CPPPAPQKTA (65 aa). Ser-5 and Ser-652 each carry phosphoserine.

Testis-specific and age-dependent (at protein level). Highly expressed. Expressed in round spermatids located in the inner half-layer of the seminiferous epithelium as well as in early elongated spermatids having cytoplasmic protrusions into the tubular lumen.

Its subcellular location is the secreted. In terms of biological role, may play a role in fertility regulation. This Rattus norvegicus (Rat) protein is Spermatogenesis-associated protein 20 (Spata20).